A 204-amino-acid chain; its full sequence is LexA repressor (204 aa).

A DNA-binding region (H-T-H motif) is located at residues 30 to 50; sequence IREICQGVGLSSPSTVHHHLK. Residues Ser125 and Lys162 each act as for autocatalytic cleavage activity in the active site.

This sequence belongs to the peptidase S24 family. As to quaternary structure, homodimer.

It carries out the reaction Hydrolysis of Ala-|-Gly bond in repressor LexA.. Functionally, represses a number of genes involved in the response to DNA damage (SOS response), including recA and lexA. In the presence of single-stranded DNA, RecA interacts with LexA causing an autocatalytic cleavage which disrupts the DNA-binding part of LexA, leading to derepression of the SOS regulon and eventually DNA repair. This is LexA repressor from Carboxydothermus hydrogenoformans (strain ATCC BAA-161 / DSM 6008 / Z-2901).